The chain runs to 310 residues: Carbamate kinase 1 (310 aa).

This sequence belongs to the carbamate kinase family.

The protein localises to the cytoplasm. It carries out the reaction hydrogencarbonate + NH4(+) + ATP = carbamoyl phosphate + ADP + H2O + H(+). It participates in metabolic intermediate metabolism; carbamoyl phosphate degradation; CO(2) and NH(3) from carbamoyl phosphate: step 1/1. This is Carbamate kinase 1 (arcC1) from Staphylococcus epidermidis (strain ATCC 12228 / FDA PCI 1200).